A 292-amino-acid polypeptide reads, in one-letter code: RNA 5'-monophosphate methyltransferase (292 aa).

The tract at residues 1-22 is disordered; the sequence is MAASTEQATGGVEKTAAEEKPR. S-adenosyl-L-methionine contacts are provided by residues Arg46, Asn76, Asp110, 135 to 136, and Met164; that span reads DF. In terms of domain architecture, Bin3-type SAM spans 53–274; sequence ELLRRLFPQS…KQATETHPIP (222 aa).

This sequence belongs to the methyltransferase superfamily. In terms of assembly, interacts with DICER1; the interaction may be mediated by RNA.

The protein resides in the cytoplasm. The catalysed reaction is a 5'-end 5'-phospho-ribonucleoside-RNA + S-adenosyl-L-methionine = a 5'-end (5'-methylphospho)-ribonucleoside-RNA + S-adenosyl-L-homocysteine. It carries out the reaction a 5'-end 5'-phospho-ribonucleoside-RNA + 2 S-adenosyl-L-methionine = a 5'-end (5'-bismethylphospho)-ribonucleoside-RNA + 2 S-adenosyl-L-homocysteine. Functionally, O-methyltransferase that specifically monomethylates 5'-monophosphate of cytoplasmic histidyl tRNA (tRNA(His)), acting as a capping enzyme by protecting tRNA(His) from cleavage by DICER1. Also able, with less efficiently, to methylate the 5' monophosphate of a subset of pre-miRNAs, acting as a negative regulator of miRNA processing. The 5' monophosphate of pre-miRNAs is recognized by DICER1 and is required for pre-miRNAs processing: methylation at this position reduces the processing of pre-miRNAs by DICER1. Was also reported to mediate dimethylation of pre-miR-145; however dimethylation cannot be reproduced by another group which observes a monomethylation of pre-miR-145. The polypeptide is RNA 5'-monophosphate methyltransferase (BCDIN3D) (Bos taurus (Bovine)).